The chain runs to 312 residues: L-lactate dehydrogenase (312 aa).

NAD(+) contacts are provided by V14, D35, and Y66. Substrate-binding residues include Q83 and R90. Residues S103, 120–122, and S145 contribute to the NAD(+) site; that span reads ASN. 122-125 provides a ligand contact to substrate; it reads NPVD. Position 150–153 (150–153) interacts with substrate; sequence DSAR. Residue H177 is the Proton acceptor of the active site. At Y220 the chain carries Phosphotyrosine. Position 229 (T229) interacts with substrate.

Belongs to the LDH/MDH superfamily. LDH family. In terms of assembly, homotetramer.

It localises to the cytoplasm. It carries out the reaction (S)-lactate + NAD(+) = pyruvate + NADH + H(+). It functions in the pathway fermentation; pyruvate fermentation to lactate; (S)-lactate from pyruvate: step 1/1. In terms of biological role, catalyzes the conversion of lactate to pyruvate. This Mycoplasma genitalium (strain ATCC 33530 / DSM 19775 / NCTC 10195 / G37) (Mycoplasmoides genitalium) protein is L-lactate dehydrogenase.